The following is a 378-amino-acid chain: MSGLEAIWWRERPGPLGALAGAPLLLAEAPFRAAAALRGALYDRGLLPAARAGAPVVSIGNLAVGGAGKTPAALAVAARLAGRGRRVAILSRGYGAARADARVASDGAGALLPAAEAGDEPALLARRLPGVAVLCGPRRAELARTAVESLGADALVLDDGFQHRALARDLDVVVLDASNPFGNGHLLPRGPNREPPSALRRAGLVWLSHADRAAPERLEALRALARDATGRAPVESRHAPTALLDGALREAGALEALRGRRVAALSGLARPAGFLRTLEALGAEVALARAFPDHHRFTAGELDAVLREAAASGCAWVVTTEKDAVRLDPALAAAAGDRLRVVRVDAELLRGADVLEAALAAALAAAPQPRPAPRAPVA.

An ATP-binding site is contributed by 63–70 (AVGGAGKT).

This sequence belongs to the LpxK family.

The enzyme catalyses a lipid A disaccharide + ATP = a lipid IVA + ADP + H(+). It participates in glycolipid biosynthesis; lipid IV(A) biosynthesis; lipid IV(A) from (3R)-3-hydroxytetradecanoyl-[acyl-carrier-protein] and UDP-N-acetyl-alpha-D-glucosamine: step 6/6. Functionally, transfers the gamma-phosphate of ATP to the 4'-position of a tetraacyldisaccharide 1-phosphate intermediate (termed DS-1-P) to form tetraacyldisaccharide 1,4'-bis-phosphate (lipid IVA). The sequence is that of Tetraacyldisaccharide 4'-kinase from Anaeromyxobacter dehalogenans (strain 2CP-C).